The sequence spans 367 residues: Anthranilate phosphoribosyltransferase (367 aa).

The span at 1 to 17 (MVLSSEASSAADHSAAA) shows a compositional bias: low complexity. The interval 1–22 (MVLSSEASSAADHSAAAPIPTS) is disordered. Residues Gly-104, 107–108 (GD), Thr-112, 114–117 (NLST), 132–140 (KHGNRAASS), and Gly-144 each bind 5-phospho-alpha-D-ribose 1-diphosphate. Gly-104 contacts anthranilate. Ser-116 is a binding site for Mg(2+). Asn-135 serves as a coordination point for anthranilate. Residue Arg-190 participates in anthranilate binding. Mg(2+) contacts are provided by Asp-248 and Glu-249.

This sequence belongs to the anthranilate phosphoribosyltransferase family. In terms of assembly, homodimer. It depends on Mg(2+) as a cofactor.

It catalyses the reaction N-(5-phospho-beta-D-ribosyl)anthranilate + diphosphate = 5-phospho-alpha-D-ribose 1-diphosphate + anthranilate. It functions in the pathway amino-acid biosynthesis; L-tryptophan biosynthesis; L-tryptophan from chorismate: step 2/5. In terms of biological role, catalyzes the transfer of the phosphoribosyl group of 5-phosphorylribose-1-pyrophosphate (PRPP) to anthranilate to yield N-(5'-phosphoribosyl)-anthranilate (PRA). The polypeptide is Anthranilate phosphoribosyltransferase (Mycobacterium marinum (strain ATCC BAA-535 / M)).